The following is a 201-amino-acid chain: dITP/XTP pyrophosphatase (201 aa).

Substrate is bound at residue Thr8 to Lys13. Mg(2+) is bound by residues Glu41 and Asp73. Asp73 serves as the catalytic Proton acceptor. Residues Ser74, Phe154–Asp157, Lys177, and His182–Arg183 contribute to the substrate site.

This sequence belongs to the HAM1 NTPase family. In terms of assembly, homodimer. Requires Mg(2+) as cofactor.

It carries out the reaction XTP + H2O = XMP + diphosphate + H(+). The enzyme catalyses dITP + H2O = dIMP + diphosphate + H(+). It catalyses the reaction ITP + H2O = IMP + diphosphate + H(+). Functionally, pyrophosphatase that catalyzes the hydrolysis of nucleoside triphosphates to their monophosphate derivatives, with a high preference for the non-canonical purine nucleotides XTP (xanthosine triphosphate), dITP (deoxyinosine triphosphate) and ITP. Seems to function as a house-cleaning enzyme that removes non-canonical purine nucleotides from the nucleotide pool, thus preventing their incorporation into DNA/RNA and avoiding chromosomal lesions. The sequence is that of dITP/XTP pyrophosphatase from Clostridium tetani (strain Massachusetts / E88).